The primary structure comprises 748 residues: Photosystem I P700 chlorophyll a apoprotein A1 (748 aa).

A run of 8 helical transmembrane segments spans residues 69–92 (IFSA…FHGA), 155–178 (LYVT…FHYH), 194–218 (LNHH…HVSL), 290–308 (VAHH…GHMY), 345–368 (WHAN…HHMY), 384–410 (LSLF…IYMV), 432–454 (AIIS…LYIH), and 529–547 (FMVH…LILL). [4Fe-4S] cluster-binding residues include Cys571 and Cys580. The next 2 helical transmembrane spans lie at 587–608 (HVFL…HFSW) and 662–684 (LSAY…MFLF). His673 contributes to the chlorophyll a' binding site. Residues Met681 and Tyr689 each contribute to the chlorophyll a site. Trp690 contacts phylloquinone. A helical membrane pass occupies residues 722-742 (AVGVAHYLLGGIATTWAFFLA).

This sequence belongs to the PsaA/PsaB family. In terms of assembly, the PsaA/B heterodimer binds the P700 chlorophyll special pair and subsequent electron acceptors. PSI consists of a core antenna complex that captures photons, and an electron transfer chain that converts photonic excitation into a charge separation. The eukaryotic PSI reaction center is composed of at least 11 subunits. P700 is a chlorophyll a/chlorophyll a' dimer, A0 is one or more chlorophyll a, A1 is one or both phylloquinones and FX is a shared 4Fe-4S iron-sulfur center. is required as a cofactor.

The protein localises to the plastid. It localises to the chloroplast thylakoid membrane. It catalyses the reaction reduced [plastocyanin] + hnu + oxidized [2Fe-2S]-[ferredoxin] = oxidized [plastocyanin] + reduced [2Fe-2S]-[ferredoxin]. Functionally, psaA and PsaB bind P700, the primary electron donor of photosystem I (PSI), as well as the electron acceptors A0, A1 and FX. PSI is a plastocyanin/cytochrome c6-ferredoxin oxidoreductase, converting photonic excitation into a charge separation, which transfers an electron from the donor P700 chlorophyll pair to the spectroscopically characterized acceptors A0, A1, FX, FA and FB in turn. Oxidized P700 is reduced on the lumenal side of the thylakoid membrane by plastocyanin or cytochrome c6. This chain is Photosystem I P700 chlorophyll a apoprotein A1, found in Cyanidioschyzon merolae (strain NIES-3377 / 10D) (Unicellular red alga).